We begin with the raw amino-acid sequence, 1293 residues long: Phosphoribosylformylglycinamidine synthase (1293 aa).

ATP-binding positions include 305–316, 384–386, and Ala-676; these read GAATGSGGEIRD and TGY. A disordered region spans residues 307 to 326; it reads ATGSGGEIRDEGATGRGSKP. 4 residues coordinate Mg(2+): Asp-677, Glu-716, Asn-720, and Asp-884. Ser-886 contacts ATP. Residues 1040-1293 form the Glutamine amidotransferase type-1 domain; it reads MAILREQGVN…MFRNARVKIG (254 aa). The active-site Nucleophile is Cys-1133. Catalysis depends on residues His-1258 and Glu-1260.

It in the N-terminal section; belongs to the FGAMS family. Monomer.

The protein resides in the cytoplasm. The catalysed reaction is N(2)-formyl-N(1)-(5-phospho-beta-D-ribosyl)glycinamide + L-glutamine + ATP + H2O = 2-formamido-N(1)-(5-O-phospho-beta-D-ribosyl)acetamidine + L-glutamate + ADP + phosphate + H(+). Its pathway is purine metabolism; IMP biosynthesis via de novo pathway; 5-amino-1-(5-phospho-D-ribosyl)imidazole from N(2)-formyl-N(1)-(5-phospho-D-ribosyl)glycinamide: step 1/2. Functionally, phosphoribosylformylglycinamidine synthase involved in the purines biosynthetic pathway. Catalyzes the ATP-dependent conversion of formylglycinamide ribonucleotide (FGAR) and glutamine to yield formylglycinamidine ribonucleotide (FGAM) and glutamate. The protein is Phosphoribosylformylglycinamidine synthase of Shewanella frigidimarina (strain NCIMB 400).